The sequence spans 169 residues: Cytochrome c oxidase subunit 4 isoform 1, mitochondrial (169 aa).

Residues 1–22 (MLATRALSLIGKRAISTSVCLR) constitute a mitochondrion transit peptide. The Mitochondrial matrix segment spans residues 23–98 (AHGSVVKSED…SFAEMNKGTN (76 aa)). Residue Lys-29 is modified to N6-acetyllysine; alternate. An N6-succinyllysine; alternate modification is found at Lys-29. Position 53 is an N6-acetyllysine (Lys-53). Ser-56 and Ser-58 each carry phosphoserine. Residue Lys-60 is modified to N6-acetyllysine; alternate. At Lys-60 the chain carries N6-succinyllysine; alternate. The residue at position 67 (Lys-67) is an N6-acetyllysine. The helical transmembrane segment at 99–124 (EWKTVVGLAMFFIGFTALVLIWEKSY) threads the bilayer. The Mitochondrial intermembrane segment spans residues 125–169 (VYGPIPHTFDRDWVAMQTKRMLDMKVNPIQGFSAKWDYNKNEWKK).

The protein belongs to the cytochrome c oxidase IV family. In terms of assembly, component of the cytochrome c oxidase (complex IV, CIV), a multisubunit enzyme composed of 14 subunits. The complex is composed of a catalytic core of 3 subunits MT-CO1, MT-CO2 and MT-CO3, encoded in the mitochondrial DNA, and 11 supernumerary subunits COX4I, COX5A, COX5B, COX6A, COX6B, COX6C, COX7A, COX7B, COX7C, COX8 and NDUFA4, which are encoded in the nuclear genome. The complex exists as a monomer or a dimer and forms supercomplexes (SCs) in the inner mitochondrial membrane with NADH-ubiquinone oxidoreductase (complex I, CI) and ubiquinol-cytochrome c oxidoreductase (cytochrome b-c1 complex, complex III, CIII), resulting in different assemblies (supercomplex SCI(1)III(2)IV(1) and megacomplex MCI(2)III(2)IV(2)). Interacts with PHB2; the interaction decreases in absence of SPHK2. Interacts with AFG1L. Interacts with ABCB7; this interaction allows the regulation of cellular iron homeostasis and cellular reactive oxygen species (ROS) levels in cardiomyocytes. Interacts with FLVCR2; this interaction occurs in the absence of heme and is disrupted upon heme binding. Interacts with IRGC.

It localises to the mitochondrion inner membrane. It participates in energy metabolism; oxidative phosphorylation. Its function is as follows. Component of the cytochrome c oxidase, the last enzyme in the mitochondrial electron transport chain which drives oxidative phosphorylation. The respiratory chain contains 3 multisubunit complexes succinate dehydrogenase (complex II, CII), ubiquinol-cytochrome c oxidoreductase (cytochrome b-c1 complex, complex III, CIII) and cytochrome c oxidase (complex IV, CIV), that cooperate to transfer electrons derived from NADH and succinate to molecular oxygen, creating an electrochemical gradient over the inner membrane that drives transmembrane transport and the ATP synthase. Cytochrome c oxidase is the component of the respiratory chain that catalyzes the reduction of oxygen to water. Electrons originating from reduced cytochrome c in the intermembrane space (IMS) are transferred via the dinuclear copper A center (CU(A)) of subunit 2 and heme A of subunit 1 to the active site in subunit 1, a binuclear center (BNC) formed by heme A3 and copper B (CU(B)). The BNC reduces molecular oxygen to 2 water molecules using 4 electrons from cytochrome c in the IMS and 4 protons from the mitochondrial matrix. This Rattus norvegicus (Rat) protein is Cytochrome c oxidase subunit 4 isoform 1, mitochondrial (Cox4i1).